We begin with the raw amino-acid sequence, 992 residues long: P3N-PIPO polyprotein (992 aa).

The Peptidase S30 domain occupies Thr168–Tyr308. Catalysis depends on for P1 proteinase activity residues His221, Glu230, and Ser262. Residues Lys361 to Cys364 carry the Involved in interaction with stylet and aphid transmission motif. The short motif at Pro617 to Lys619 is the Involved in virions binding and aphid transmission element. The Peptidase C6 domain maps to Met643–Gly765. Residues Cys651 and His724 each act as for helper component proteinase activity in the active site.

This sequence belongs to the potyviridae P3N-PIPO polyprotein family. Interacts (via PIPO domain) with host PCaP1 protein; this interaction may help to anchor the movement complex to the plasma membrane from which the complex could move to the plasmodesmata. Post-translationally, potyviral RNA is expressed as two polyproteins which undergo post-translational proteolytic processing. Genome polyprotein is processed by NIa-pro, P1 and HC-pro proteinases resulting in the production of at least ten individual proteins. P3N-PIPO is cleaved by P1 and HC-pro proteinases resulting in the production of three individual proteins. The P1 proteinase and the HC-pro cleave only their respective C-termini autocatalytically.

It is found in the host cell junction. It localises to the host plasmodesma. The catalysed reaction is Hydrolyzes a Gly-|-Gly bond at its own C-terminus, commonly in the sequence -Tyr-Xaa-Val-Gly-|-Gly, in the processing of the potyviral polyprotein.. In terms of biological role, required for aphid transmission and also has proteolytic activity. Only cleaves a Gly-Gly dipeptide at its own C-terminus. Interacts with virions and aphid stylets. Acts as a suppressor of RNA-mediated gene silencing, also known as post-transcriptional gene silencing (PTGS), a mechanism of plant viral defense that limits the accumulation of viral RNAs. May have RNA-binding activity. Functionally, allows efficient cell to cell propagation, by bypassing the host cell wall barrier. Transports viral genome to neighboring plant cells directly through plasmosdesmata, without any budding. This chain is P3N-PIPO polyprotein, found in Glycine max (Soybean).